The primary structure comprises 126 residues: Protein MGF 100-1R (126 aa).

The protein belongs to the asfivirus MGF 100 family.

In terms of biological role, plays a role in virus cell tropism, and may be required for efficient virus replication in macrophages. The sequence is that of Protein MGF 100-1R from Ornithodoros (relapsing fever ticks).